The chain runs to 332 residues: Leucine carboxyl methyltransferase 1 (332 aa).

Residues arginine 71, glycine 96, aspartate 120, aspartate 169–leucine 170, and glutamate 196 each bind S-adenosyl-L-methionine.

Belongs to the methyltransferase superfamily. LCMT family.

The enzyme catalyses [phosphatase 2A protein]-C-terminal L-leucine + S-adenosyl-L-methionine = [phosphatase 2A protein]-C-terminal L-leucine methyl ester + S-adenosyl-L-homocysteine. In terms of biological role, methylates the carboxyl group of the C-terminal leucine residue of protein phosphatase 2A catalytic subunits to form alpha-leucine ester residues. The chain is Leucine carboxyl methyltransferase 1 (Lcmt1) from Rattus norvegicus (Rat).